The chain runs to 390 residues: Protein-glutamate methylesterase/protein-glutamine glutaminase (390 aa).

Positions 4–121 constitute a Response regulatory domain; sequence RALVVDDSGF…SGDMEQVKRQ (118 aa). Asp55 carries the post-translational modification 4-aspartylphosphate. A disordered region spans residues 130–198; that stretch reads GGGRGAPAGR…AAPAPERGQR (69 aa). Composition is skewed to low complexity over residues 136-148 and 179-193; these read PAGR…APVD and EAPV…APAP. The CheB-type methylesterase domain maps to 201-390; that stretch reads PGALRLVVIG…QVGEELAKLR (190 aa). Active-site residues include Ser212, His239, and Asp335.

It belongs to the CheB family. In terms of processing, phosphorylated by CheA. Phosphorylation of the N-terminal regulatory domain activates the methylesterase activity.

It is found in the cytoplasm. The catalysed reaction is [protein]-L-glutamate 5-O-methyl ester + H2O = L-glutamyl-[protein] + methanol + H(+). The enzyme catalyses L-glutaminyl-[protein] + H2O = L-glutamyl-[protein] + NH4(+). Involved in chemotaxis. Part of a chemotaxis signal transduction system that modulates chemotaxis in response to various stimuli. Catalyzes the demethylation of specific methylglutamate residues introduced into the chemoreceptors (methyl-accepting chemotaxis proteins or MCP) by CheR. Also mediates the irreversible deamidation of specific glutamine residues to glutamic acid. The chain is Protein-glutamate methylesterase/protein-glutamine glutaminase from Alkalilimnicola ehrlichii (strain ATCC BAA-1101 / DSM 17681 / MLHE-1).